We begin with the raw amino-acid sequence, 105 residues long: Met repressor (105 aa).

It belongs to the MetJ family. As to quaternary structure, homodimer.

The protein resides in the cytoplasm. Its function is as follows. This regulatory protein, when combined with SAM (S-adenosylmethionine) represses the expression of the methionine regulon and of enzymes involved in SAM synthesis. In Vibrio vulnificus (strain CMCP6), this protein is Met repressor.